A 246-amino-acid chain; its full sequence is Cytochrome c oxidase subunit 2 (246 aa).

Transmembrane regions (helical) follow at residues His31 to Met51 and Ile72 to Leu92. Cu cation contacts are provided by His175, Cys210, Glu212, Cys214, His218, and Met221. Residue Glu212 coordinates Mg(2+).

This sequence belongs to the cytochrome c oxidase subunit 2 family. In terms of assembly, component of the cytochrome c oxidase (complex IV, CIV), a multisubunit enzyme composed of a catalytic core of 3 subunits and several supernumerary subunits. The complex exists as a monomer or a dimer and forms supercomplexes (SCs) in the inner mitochondrial membrane with ubiquinol-cytochrome c oxidoreductase (cytochrome b-c1 complex, complex III, CIII). The cofactor is Cu cation.

Its subcellular location is the mitochondrion inner membrane. It catalyses the reaction 4 Fe(II)-[cytochrome c] + O2 + 8 H(+)(in) = 4 Fe(III)-[cytochrome c] + 2 H2O + 4 H(+)(out). In terms of biological role, component of the cytochrome c oxidase, the last enzyme in the mitochondrial electron transport chain which drives oxidative phosphorylation. The respiratory chain contains 3 multisubunit complexes succinate dehydrogenase (complex II, CII), ubiquinol-cytochrome c oxidoreductase (cytochrome b-c1 complex, complex III, CIII) and cytochrome c oxidase (complex IV, CIV), that cooperate to transfer electrons derived from NADH and succinate to molecular oxygen, creating an electrochemical gradient over the inner membrane that drives transmembrane transport and the ATP synthase. Cytochrome c oxidase is the component of the respiratory chain that catalyzes the reduction of oxygen to water. Electrons originating from reduced cytochrome c in the intermembrane space (IMS) are transferred via the dinuclear copper A center (CU(A)) of subunit 2 and heme A of subunit 1 to the active site in subunit 1, a binuclear center (BNC) formed by heme A3 and copper B (CU(B)). The BNC reduces molecular oxygen to 2 water molecules using 4 electrons from cytochrome c in the IMS and 4 protons from the mitochondrial matrix. In Debaryomyces hansenii (strain ATCC 36239 / CBS 767 / BCRC 21394 / JCM 1990 / NBRC 0083 / IGC 2968) (Yeast), this protein is Cytochrome c oxidase subunit 2 (COX2).